A 383-amino-acid polypeptide reads, in one-letter code: Putative glutamate--cysteine ligase 2-2 (383 aa).

Belongs to the glutamate--cysteine ligase type 2 family. YbdK subfamily.

It catalyses the reaction L-cysteine + L-glutamate + ATP = gamma-L-glutamyl-L-cysteine + ADP + phosphate + H(+). Functionally, ATP-dependent carboxylate-amine ligase which exhibits weak glutamate--cysteine ligase activity. In Paenarthrobacter aurescens (strain TC1), this protein is Putative glutamate--cysteine ligase 2-2.